Reading from the N-terminus, the 556-residue chain is Arginine--tRNA ligase (556 aa).

A 'HIGH' region motif is present at residues 133–143; that stretch reads ANPTGPIHIGH.

This sequence belongs to the class-I aminoacyl-tRNA synthetase family. Monomer.

The protein resides in the cytoplasm. It carries out the reaction tRNA(Arg) + L-arginine + ATP = L-arginyl-tRNA(Arg) + AMP + diphosphate. This Dehalococcoides mccartyi (strain ATCC BAA-2100 / JCM 16839 / KCTC 5957 / BAV1) protein is Arginine--tRNA ligase.